A 100-amino-acid polypeptide reads, in one-letter code: Ubiquitin-related modifier 1 (100 aa).

A 1-thioglycine modification is found at glycine 100. Glycine 100 participates in a covalent cross-link: Glycyl lysine isopeptide (Gly-Lys) (interchain with K-? in acceptor proteins).

This sequence belongs to the URM1 family. Post-translationally, C-terminal thiocarboxylation occurs in 2 steps, it is first acyl-adenylated (-COAMP) via the hesA/moeB/thiF part of UBA4, then thiocarboxylated (-COSH) via the rhodanese domain of UBA4.

It localises to the cytoplasm. It participates in tRNA modification; 5-methoxycarbonylmethyl-2-thiouridine-tRNA biosynthesis. In terms of biological role, acts as a sulfur carrier required for 2-thiolation of mcm(5)S(2)U at tRNA wobble positions of cytosolic tRNA(Lys), tRNA(Glu) and tRNA(Gln). Serves as sulfur donor in tRNA 2-thiolation reaction by being thiocarboxylated (-COSH) at its C-terminus by the MOCS3 homolog UBA4. The sulfur is then transferred to tRNA to form 2-thiolation of mcm(5)S(2)U. Prior mcm(5) tRNA modification by the elongator complex is required for 2-thiolation. Also acts as a ubiquitin-like protein (UBL) that is covalently conjugated via an isopeptide bond to lysine residues of target proteins such as AHP1. The thiocarboxylated form serves as substrate for conjugation and oxidative stress specifically induces the formation of UBL-protein conjugates. In Eremothecium gossypii (strain ATCC 10895 / CBS 109.51 / FGSC 9923 / NRRL Y-1056) (Yeast), this protein is Ubiquitin-related modifier 1.